Consider the following 112-residue polypeptide: Large ribosomal subunit protein uL22 (112 aa).

It belongs to the universal ribosomal protein uL22 family. Part of the 50S ribosomal subunit.

Functionally, this protein binds specifically to 23S rRNA; its binding is stimulated by other ribosomal proteins, e.g. L4, L17, and L20. It is important during the early stages of 50S assembly. It makes multiple contacts with different domains of the 23S rRNA in the assembled 50S subunit and ribosome. Its function is as follows. The globular domain of the protein is located near the polypeptide exit tunnel on the outside of the subunit, while an extended beta-hairpin is found that lines the wall of the exit tunnel in the center of the 70S ribosome. This Lawsonia intracellularis (strain PHE/MN1-00) protein is Large ribosomal subunit protein uL22.